Here is a 395-residue protein sequence, read N- to C-terminus: Zinc-regulated GTPase metalloprotein activator 1B (395 aa).

The segment at 1 to 36 is disordered; sequence MLPAVGSADEEEDPAEEDCPELVPMETTQSEEEEKS. Positions 8-20 are enriched in acidic residues; sequence ADEEEDPAEEDCP. The psi-PxLVp motif motif lies at 17–24; the sequence is EDCPELVP. 49-56 is a binding site for GTP; it reads GYLGAGKT. Zn(2+) is bound by residues C107, C109, and C110. Positions 107-110 match the CXCC motif motif; sequence CLCC. GTP is bound by residues 110 to 114 and 203 to 206; these read CSVKD and NKTD. Residues 274–377 form the CobW C-terminal domain; the sequence is IVTITFEVPG…ILKQLFIATV (104 aa).

The protein belongs to the SIMIBI class G3E GTPase family. ZNG1 subfamily.

It localises to the nucleus. The catalysed reaction is GTP + H2O = GDP + phosphate + H(+). Its function is as follows. Zinc chaperone that directly transfers zinc cofactor to target metalloproteins, thereby activating them. Catalyzes zinc insertion into the active site of methionine aminopeptidase METAP1, which function to cleave the initiator methionine from polypeptides during or after protein translation. Mechanistically, the N-terminal psi-PxLVp motif binds to the C6H2-type zinc finger of inactive form of METAP1. After formation of the docked complex, zinc is transferred from the CXCC motif in the GTPase domain of ZNG1B to the zinc binding site in the peptidase domain of METAP1 in a process requiring GTP hydrolysis. GTP/GDP exchange is required for release of active METAP1. The protein is Zinc-regulated GTPase metalloprotein activator 1B of Homo sapiens (Human).